The sequence spans 1282 residues: Crescerin-like protein che-12 (1282 aa).

2 TOG regions span residues 33–240 (DFDT…EHTE) and 268–515 (PSLV…MDSF). 8 HEAT repeats span residues 59–96 (QKKGELFKCIDKIICDDRWELQHQCIKFLVEAMPTFGS), 100–137 (YCMCFVMPNLIPKLVSNKVTVRKITHQAIATFLRLKPE), 162–209 (ELHH…FIGN), 261–300 (RLRFGIVPSLVCALIAEDTDANQRISGLEKMKQVVDQITP), 308–345 (PHLHSYLLMLSNVLEDLNFKVVVLALDIVRATGHHLKG), 349–386 (AHIQQFVNLVAKHFGNQKSVIKQIIMMTFMELFQNINP), 388–421 (TVGGCLRVFLENKNSRVREEVINIYTASLMTISP), and 424–461 (FNLQPLVNILVPMFHDVKKRVRLAAFEQLSVLAYLLNG). The segment at 566–714 (IQQQGQAEKP…RSFDDRPAKA (149 aa)) is disordered. Low complexity-rich tracts occupy residues 575-592 (PSFSLPQQPAQQASHQAQ) and 633-644 (SAASNPNSSTSS). A compositionally biased stretch (basic and acidic residues) spans 702–712 (DPPRSFDDRPA). TOG stretches follow at residues 800 to 1022 (NMSV…ANVE) and 1066 to 1282 (TELL…ALIR). 7 HEAT repeats span residues 838–875 (DNLKEVIIAILNECKNLRSSVSRVAIVTIGTVAQNLNS), 879–917 (SEMEKICAVLLSKSGDVSNAFIRDDATDSLNKLVKAATA), 919–953 (KALQGIILAGAKSKNNTIRSSCANFVYDIITIQGS), 961–998 (NALSNVLPVLLQFSRDQSPQVRNPGKQSLCFLSKDPNF), 1095–1132 (ASDTRLIEAFISRLGDTNGKVASCAMETYISTMGSMAK), 1177–1214 (IEPVSLLPAMTSATKKSNVKQRPFILTQYCELSKLAYK), and 1219–1258 (QVEVMALPLLWDSVKNSAPDVDNKKATQYLAKTLAKLIGE).

Belongs to the Crescerin family. Detected in a subset of amphid neurons that lack wing- or finger-like ciliary extensions. Likewise, detected in phasmid neurons.

Its subcellular location is the cell projection. The protein localises to the cilium. It is found in the perikaryon. It localises to the dendrite. Its function is as follows. Required for normal structure and function of sensory cilia on amphid neurons, especially for the formation of distal ciliary structures, but is less important for normal assembly of middle and basal ciliary structures. Plays a role in the organization of axoneme microtubule bundles in sensory cilia. Required for normal structure and function of the ASER neuron that mediates attraction to NaCl. Required for normal chemotaxis to NaCl. Required for normal avoidance response to high osmolarity. In contrast, is not required for normal chemotaxis to isoamyl alcohol. Does not play a role in intraflagella transport (IFT). Promotes dauer formation in response to pheromones such as the ascarosides ascr#2, ascr#3, ascr#5, ascr#8 and icas#9. In Caenorhabditis elegans, this protein is Crescerin-like protein che-12.